Consider the following 261-residue polypeptide: Succinate dehydrogenase iron-sulfur subunit (261 aa).

The region spanning 28–119 is the 2Fe-2S ferredoxin-type domain; it reads RKVQVYRYDP…DIKIYPLPHM (92 aa). [2Fe-2S] cluster-binding residues include cysteine 80, cysteine 85, and cysteine 100. Residues 161 to 191 form the 4Fe-4S ferredoxin-type domain; sequence DREKLDGLYECILCACCSTSCPSYWWNSDKY. The [4Fe-4S] cluster site is built by cysteine 171, cysteine 174, and cysteine 177. Residue cysteine 181 participates in [3Fe-4S] cluster binding. Tryptophan 186 lines the a ubiquinone pocket. [3Fe-4S] cluster is bound by residues cysteine 228 and cysteine 234. [4Fe-4S] cluster is bound at residue cysteine 238.

The protein belongs to the succinate dehydrogenase/fumarate reductase iron-sulfur protein family. As to quaternary structure, part of an enzyme complex containing four subunits: a flavoprotein, an iron-sulfur, cytochrome b-556, and a hydrophobic anchor protein. [2Fe-2S] cluster serves as cofactor. The cofactor is [3Fe-4S] cluster. Requires [4Fe-4S] cluster as cofactor.

The catalysed reaction is a quinone + succinate = fumarate + a quinol. It participates in carbohydrate metabolism; tricarboxylic acid cycle; fumarate from succinate (bacterial route): step 1/1. In Rickettsia typhi (strain ATCC VR-144 / Wilmington), this protein is Succinate dehydrogenase iron-sulfur subunit (sdhB).